We begin with the raw amino-acid sequence, 404 residues long: Propionate kinase (404 aa).

It belongs to the acetokinase family. PduW subfamily.

The protein localises to the cytoplasm. It catalyses the reaction propanoate + ATP = propanoyl phosphate + ADP. Its pathway is polyol metabolism; 1,2-propanediol degradation. Its function is as follows. Works with phosphate acetyltransferase (pta) to capture exogenous propionate and regenerate propionyl-CoA during degradation of 1,2-propanediol (1,2-PD). Expression of a cosmid containing the full 21-gene pdu operon in E.coli allows E.coli to grow on 1,2-propanediol (1,2-PD) with the appearance of bacterial microcompartments (BMC) in its cytoplasm. The chain is Propionate kinase from Citrobacter freundii.